The following is a 69-amino-acid chain: Putative membrane protein insertion efficiency factor (69 aa).

This sequence belongs to the UPF0161 family.

It is found in the cell membrane. Its function is as follows. Could be involved in insertion of integral membrane proteins into the membrane. This is Putative membrane protein insertion efficiency factor from Caldanaerobacter subterraneus subsp. tengcongensis (strain DSM 15242 / JCM 11007 / NBRC 100824 / MB4) (Thermoanaerobacter tengcongensis).